The following is a 168-amino-acid chain: Probable chemoreceptor glutamine deamidase CheD (168 aa).

The protein belongs to the CheD family.

It catalyses the reaction L-glutaminyl-[protein] + H2O = L-glutamyl-[protein] + NH4(+). Probably deamidates glutamine residues to glutamate on methyl-accepting chemotaxis receptors (MCPs), playing an important role in chemotaxis. The chain is Probable chemoreceptor glutamine deamidase CheD from Pseudomonas syringae pv. tomato (strain ATCC BAA-871 / DC3000).